Here is a 284-residue protein sequence, read N- to C-terminus: Bifunctional protein FolD (284 aa).

NADP(+) contacts are provided by residues 166–168 and Ile232; that span reads GAS.

The protein belongs to the tetrahydrofolate dehydrogenase/cyclohydrolase family. As to quaternary structure, homodimer.

The catalysed reaction is (6R)-5,10-methylene-5,6,7,8-tetrahydrofolate + NADP(+) = (6R)-5,10-methenyltetrahydrofolate + NADPH. It catalyses the reaction (6R)-5,10-methenyltetrahydrofolate + H2O = (6R)-10-formyltetrahydrofolate + H(+). It functions in the pathway one-carbon metabolism; tetrahydrofolate interconversion. In terms of biological role, catalyzes the oxidation of 5,10-methylenetetrahydrofolate to 5,10-methenyltetrahydrofolate and then the hydrolysis of 5,10-methenyltetrahydrofolate to 10-formyltetrahydrofolate. In Shewanella baltica (strain OS223), this protein is Bifunctional protein FolD.